The following is a 96-amino-acid chain: Small ribosomal subunit protein bS6 (96 aa).

The protein belongs to the bacterial ribosomal protein bS6 family.

Its function is as follows. Binds together with bS18 to 16S ribosomal RNA. The polypeptide is Small ribosomal subunit protein bS6 (Mycobacteroides abscessus (strain ATCC 19977 / DSM 44196 / CCUG 20993 / CIP 104536 / JCM 13569 / NCTC 13031 / TMC 1543 / L948) (Mycobacterium abscessus)).